Reading from the N-terminus, the 77-residue chain is Small ribosomal subunit protein bS16c (77 aa).

This sequence belongs to the bacterial ribosomal protein bS16 family.

It is found in the plastid. It localises to the chloroplast. The chain is Small ribosomal subunit protein bS16c from Eucalyptus globulus subsp. globulus (Tasmanian blue gum).